The chain runs to 425 residues: MLIQVQPSHLTDTNLSLHSAKPSSDHQNLLPSEFMTERPLNTTEQDLTALNHTEKPDCGKELLLYGDTEKIVIGVVLSIITLFTIAGNALVIISVCIVKKLRQPSNYLVVSLAAADLSVAVAVMPFVIITDLVGGEWLFGKVFCNVFIAMDVMCCTASIMTLCVISVDRYLGITRPLTYPARQNGKLMAKMVFIVWLLSASITLPPLFGWAKNVNVERVCLISQDFGYTVYSTAVAFYIPMTVMLVMYQRIFVAAKISAEKHKFVNIPRLYEQEGIYCLEDKLPPKKNSKKKKAVEEFASLSKLIRQDRKNISIFKREQKAARTLGIIVGAFTFCWLPFFLLSTARPFICGIMCSCMPLRLERTLLWLGYTNSLINPLIYAFFNRDLRTTFWNLLRCKYTNINRRLSAASMHEALKVTERHEGIL.

At 1-72 (MLIQVQPSHL…LLYGDTEKIV (72 aa)) the chain is on the extracellular side. Residues Asn-14, Asn-41, and Asn-51 are each glycosylated (N-linked (GlcNAc...) asparagine). The chain crosses the membrane as a helical span at residues 73 to 97 (IGVVLSIITLFTIAGNALVIISVCI). The Cytoplasmic portion of the chain corresponds to 98–107 (VKKLRQPSNY). A helical membrane pass occupies residues 108 to 129 (LVVSLAAADLSVAVAVMPFVII). The Extracellular portion of the chain corresponds to 130–141 (TDLVGGEWLFGK). Residues 142-167 (VFCNVFIAMDVMCCTASIMTLCVISV) form a helical membrane-spanning segment. A disulfide bridge links Cys-144 with Cys-220. Asp-151 serves as a coordination point for serotonin. Over 168 to 187 (DRYLGITRPLTYPARQNGKL) the chain is Cytoplasmic. Residues 188-208 (MAKMVFIVWLLSASITLPPLF) traverse the membrane as a helical segment. The Extracellular portion of the chain corresponds to 209–226 (GWAKNVNVERVCLISQDF). Residues 227–249 (GYTVYSTAVAFYIPMTVMLVMYQ) traverse the membrane as a helical segment. At 250–322 (RIFVAAKISA…SIFKREQKAA (73 aa)) the chain is on the cytoplasmic side. A helical transmembrane segment spans residues 323–348 (RTLGIIVGAFTFCWLPFFLLSTARPF). The Extracellular segment spans residues 349–359 (ICGIMCSCMPL). The helical transmembrane segment at 360–383 (RLERTLLWLGYTNSLINPLIYAFF) threads the bilayer. The Cytoplasmic segment spans residues 384-425 (NRDLRTTFWNLLRCKYTNINRRLSAASMHEALKVTERHEGIL). Cys-397 carries S-palmitoyl cysteine lipidation.

Belongs to the G-protein coupled receptor 1 family.

It is found in the cell membrane. Its function is as follows. G-protein coupled receptor for 5-hydroxytryptamine (serotonin), a biogenic hormone that functions as a neurotransmitter, a hormone and a mitogen. Ligand binding causes a conformation change that triggers signaling via guanine nucleotide-binding proteins (G proteins) and modulates the activity of downstream effectors. HTR7 is coupled to G(s) G alpha proteins and mediates activation of adenylate cyclase activity. The chain is 5-hydroxytryptamine receptor 7 (htr7) from Xenopus laevis (African clawed frog).